A 281-amino-acid polypeptide reads, in one-letter code: 2,3,4,5-tetrahydropyridine-2,6-dicarboxylate N-succinyltransferase (281 aa).

The protein belongs to the transferase hexapeptide repeat family.

Its subcellular location is the cytoplasm. The catalysed reaction is (S)-2,3,4,5-tetrahydrodipicolinate + succinyl-CoA + H2O = (S)-2-succinylamino-6-oxoheptanedioate + CoA. It functions in the pathway amino-acid biosynthesis; L-lysine biosynthesis via DAP pathway; LL-2,6-diaminopimelate from (S)-tetrahydrodipicolinate (succinylase route): step 1/3. The chain is 2,3,4,5-tetrahydropyridine-2,6-dicarboxylate N-succinyltransferase from Afipia carboxidovorans (strain ATCC 49405 / DSM 1227 / KCTC 32145 / OM5) (Oligotropha carboxidovorans).